The sequence spans 74 residues: Exodeoxyribonuclease 7 small subunit (74 aa).

It belongs to the XseB family. As to quaternary structure, heterooligomer composed of large and small subunits.

Its subcellular location is the cytoplasm. It catalyses the reaction Exonucleolytic cleavage in either 5'- to 3'- or 3'- to 5'-direction to yield nucleoside 5'-phosphates.. Functionally, bidirectionally degrades single-stranded DNA into large acid-insoluble oligonucleotides, which are then degraded further into small acid-soluble oligonucleotides. In Thermotoga neapolitana (strain ATCC 49049 / DSM 4359 / NBRC 107923 / NS-E), this protein is Exodeoxyribonuclease 7 small subunit.